The chain runs to 241 residues: 3-oxoacyl-[acyl-carrier-protein] reductase FabG (241 aa).

Residues 13–16 (GASG), S38, 57–58 (EV), and N83 each bind NADP(+). S135 is a substrate binding site. Y148 acts as the Proton acceptor in catalysis. Residues 148–152 (YCASK) and I181 each bind NADP(+).

Belongs to the short-chain dehydrogenases/reductases (SDR) family. Homotetramer.

The catalysed reaction is a (3R)-hydroxyacyl-[ACP] + NADP(+) = a 3-oxoacyl-[ACP] + NADPH + H(+). Its pathway is lipid metabolism; fatty acid biosynthesis. Functionally, catalyzes the NADPH-dependent reduction of beta-ketoacyl-ACP substrates to beta-hydroxyacyl-ACP products, the first reductive step in the elongation cycle of fatty acid biosynthesis. This Rickettsia conorii (strain ATCC VR-613 / Malish 7) protein is 3-oxoacyl-[acyl-carrier-protein] reductase FabG (fabG).